The sequence spans 128 residues: Aspartate 1-decarboxylase (128 aa).

Catalysis depends on Ser-25, which acts as the Schiff-base intermediate with substrate; via pyruvic acid. Ser-25 carries the post-translational modification Pyruvic acid (Ser). Residue Thr-57 participates in substrate binding. Tyr-58 (proton donor) is an active-site residue. 73 to 75 (GSA) serves as a coordination point for substrate.

This sequence belongs to the PanD family. In terms of assembly, heterooctamer of four alpha and four beta subunits. Pyruvate is required as a cofactor. Post-translationally, is synthesized initially as an inactive proenzyme, which is activated by self-cleavage at a specific serine bond to produce a beta-subunit with a hydroxyl group at its C-terminus and an alpha-subunit with a pyruvoyl group at its N-terminus.

It localises to the cytoplasm. The enzyme catalyses L-aspartate + H(+) = beta-alanine + CO2. The protein operates within cofactor biosynthesis; (R)-pantothenate biosynthesis; beta-alanine from L-aspartate: step 1/1. Functionally, catalyzes the pyruvoyl-dependent decarboxylation of aspartate to produce beta-alanine. The polypeptide is Aspartate 1-decarboxylase (Burkholderia vietnamiensis (strain G4 / LMG 22486) (Burkholderia cepacia (strain R1808))).